The sequence spans 114 residues: Large ribosomal subunit protein uL18 (114 aa).

This sequence belongs to the universal ribosomal protein uL18 family. As to quaternary structure, part of the 50S ribosomal subunit; part of the 5S rRNA/L5/L18/L25 subcomplex. Contacts the 5S and 23S rRNAs.

Functionally, this is one of the proteins that bind and probably mediate the attachment of the 5S RNA into the large ribosomal subunit, where it forms part of the central protuberance. The polypeptide is Large ribosomal subunit protein uL18 (Porphyromonas gingivalis (strain ATCC BAA-308 / W83)).